The chain runs to 285 residues: Bifunctional protein FolD (285 aa).

NADP(+)-binding positions include 166–168 and Ile-232; that span reads GAS.

Belongs to the tetrahydrofolate dehydrogenase/cyclohydrolase family. Homodimer.

It carries out the reaction (6R)-5,10-methylene-5,6,7,8-tetrahydrofolate + NADP(+) = (6R)-5,10-methenyltetrahydrofolate + NADPH. The enzyme catalyses (6R)-5,10-methenyltetrahydrofolate + H2O = (6R)-10-formyltetrahydrofolate + H(+). Its pathway is one-carbon metabolism; tetrahydrofolate interconversion. Its function is as follows. Catalyzes the oxidation of 5,10-methylenetetrahydrofolate to 5,10-methenyltetrahydrofolate and then the hydrolysis of 5,10-methenyltetrahydrofolate to 10-formyltetrahydrofolate. The sequence is that of Bifunctional protein FolD from Buchnera aphidicola subsp. Schizaphis graminum (strain Sg).